Here is a 342-residue protein sequence, read N- to C-terminus: Dihydroorotase (342 aa).

The Zn(2+) site is built by His-13 and His-15. Residues 15–17 (HLR) and Asn-41 each bind substrate. Residues Lys-98, His-135, and His-173 each contribute to the Zn(2+) site. N6-carboxylysine is present on Lys-98. Residue His-135 participates in substrate binding. Leu-218 contributes to the substrate binding site. A Zn(2+)-binding site is contributed by Asp-246. Residue Asp-246 is part of the active site. Substrate is bound by residues His-250 and Ala-262.

Belongs to the metallo-dependent hydrolases superfamily. DHOase family. Class II DHOase subfamily. As to quaternary structure, homodimer. Requires Zn(2+) as cofactor.

The catalysed reaction is (S)-dihydroorotate + H2O = N-carbamoyl-L-aspartate + H(+). The protein operates within pyrimidine metabolism; UMP biosynthesis via de novo pathway; (S)-dihydroorotate from bicarbonate: step 3/3. Functionally, catalyzes the reversible cyclization of carbamoyl aspartate to dihydroorotate. In Vibrio vulnificus (strain YJ016), this protein is Dihydroorotase.